A 265-amino-acid chain; its full sequence is Phosphonoacetaldehyde hydrolase (265 aa).

The active-site Nucleophile is the Asp10. Positions 10 and 12 each coordinate Mg(2+). The active-site Schiff-base intermediate with substrate is Lys51. Residue Asp184 participates in Mg(2+) binding.

The protein belongs to the HAD-like hydrolase superfamily. PhnX family. As to quaternary structure, homodimer. Requires Mg(2+) as cofactor.

The catalysed reaction is phosphonoacetaldehyde + H2O = acetaldehyde + phosphate + H(+). In terms of biological role, involved in phosphonate degradation. This chain is Phosphonoacetaldehyde hydrolase, found in Latilactobacillus sakei subsp. sakei (strain 23K) (Lactobacillus sakei subsp. sakei).